The chain runs to 283 residues: Release factor glutamine methyltransferase (283 aa).

Residues 121-125, aspartate 144, and asparagine 188 contribute to the S-adenosyl-L-methionine site; that span reads GTGSG. Position 188-191 (188-191) interacts with substrate; the sequence is NPPY.

It belongs to the protein N5-glutamine methyltransferase family. PrmC subfamily.

It catalyses the reaction L-glutaminyl-[peptide chain release factor] + S-adenosyl-L-methionine = N(5)-methyl-L-glutaminyl-[peptide chain release factor] + S-adenosyl-L-homocysteine + H(+). In terms of biological role, methylates the class 1 translation termination release factors RF1/PrfA and RF2/PrfB on the glutamine residue of the universally conserved GGQ motif. The polypeptide is Release factor glutamine methyltransferase (Bacillus cereus (strain ATCC 14579 / DSM 31 / CCUG 7414 / JCM 2152 / NBRC 15305 / NCIMB 9373 / NCTC 2599 / NRRL B-3711)).